A 358-amino-acid polypeptide reads, in one-letter code: Isopentenyl-diphosphate delta-isomerase (358 aa).

Position 12–13 (12–13) interacts with substrate; that stretch reads RK. Residues 69–71, Ser-99, and Asn-128 each bind FMN; that span reads AMT. Gln-158 serves as a coordination point for substrate. Glu-159 is a Mg(2+) binding site. FMN-binding positions include Lys-190, Thr-220, 267–269, and 288–289; these read GIR and AG.

The protein belongs to the IPP isomerase type 2 family. In terms of assembly, homooctamer. Dimer of tetramers. FMN serves as cofactor. The cofactor is NADPH. Mg(2+) is required as a cofactor.

Its subcellular location is the cytoplasm. It carries out the reaction isopentenyl diphosphate = dimethylallyl diphosphate. Its function is as follows. Involved in the biosynthesis of isoprenoids. Catalyzes the 1,3-allylic rearrangement of the homoallylic substrate isopentenyl (IPP) to its allylic isomer, dimethylallyl diphosphate (DMAPP). This chain is Isopentenyl-diphosphate delta-isomerase, found in Listeria monocytogenes serotype 4b (strain CLIP80459).